A 167-amino-acid chain; its full sequence is Transmembrane protein 229B (167 aa).

Over 1 to 14 (MASAEPLTALSRWY) the chain is Cytoplasmic. A helical transmembrane segment spans residues 15–35 (LYAIHGYFCEVMFTAAWEFVV). Over 36 to 40 (NFNWK) the chain is Extracellular. A helical transmembrane segment spans residues 41 to 61 (FPGVTSVWALFIYGTSILIVE). The Cytoplasmic portion of the chain corresponds to 62-73 (RMYLRLRGRCPL). A helical transmembrane segment spans residues 74-94 (LVRCVIYTLWTYLWEFTTGFI). The Extracellular portion of the chain corresponds to 95–109 (LRQFNACPWDYSQFD). The chain crosses the membrane as a helical span at residues 110–130 (FDFMGLITLEYAVPWFCGALI). Residues 131–167 (MEQFIIRNTLRLRFDKDAEPGEPASPPALANGHVKTD) lie on the Cytoplasmic side of the membrane. A disordered region spans residues 148 to 167 (AEPGEPASPPALANGHVKTD).

Belongs to the TMEM229 family.

It is found in the membrane. The polypeptide is Transmembrane protein 229B (TMEM229B) (Mus musculus (Mouse)).